The following is a 319-amino-acid chain: Coiled-coil domain-containing protein 149 (319 aa).

2 coiled-coil regions span residues 1–199 and 259–286; these read MANQ…RKNS and IQHQRQTNKILGNRVAELEKKLRTLEVS. Residues 298-318 form a helical membrane-spanning segment; that stretch reads VSIGFGSMFFLKYLCLWLIAV.

It belongs to the CCDC149 family.

It is found in the membrane. This Bos taurus (Bovine) protein is Coiled-coil domain-containing protein 149 (CCDC149).